The primary structure comprises 283 residues: MGYTLWNDQIVKDEEVKIDKEDRGYQFGDGVYEVVKVYNGEMFTVNEHIDRLYASAEKIRITIPYTKDKFHQLLHELVEKNELNTGHIYFQVTRGTSPRAHQFPENTVKPVIIGYTKENPRPLENLEKGVKATFVEDIRWLRCDIKSLNLLGAVLAKQEAHEKGCYEAILHRNNTVTEGSSSNVFGIKDGILYTHPANNMILKGITRDVVIACANEINMPVKEIPFTTHEALKMDELFVTSTTSEITPVIEIDGKLIRDGKVGEWTRKLQKQFETKIPKPLHI.

Position 32 (tyrosine 32) interacts with substrate. Residue arginine 51 participates in pyridoxal 5'-phosphate binding. The substrate site is built by arginine 99 and histidine 101. The Proton acceptor role is filled by lysine 146. At lysine 146 the chain carries N6-(pyridoxal phosphate)lysine. Glutamate 178 contributes to the pyridoxal 5'-phosphate binding site.

This sequence belongs to the class-IV pyridoxal-phosphate-dependent aminotransferase family. As to quaternary structure, homodimer. Requires pyridoxal 5'-phosphate as cofactor.

The enzyme catalyses D-alanine + 2-oxoglutarate = D-glutamate + pyruvate. In terms of biological role, acts on the D-isomers of alanine, leucine, aspartate, glutamate, aminobutyrate, norvaline and asparagine. The enzyme transfers an amino group from a substrate D-amino acid to the pyridoxal phosphate cofactor to form pyridoxamine and an alpha-keto acid in the first half-reaction. The second-half reaction is the reverse of the first, transferring the amino group from the pyridoxamine to a second alpha-keto acid to form the product D-amino acid via a ping-pong mechanism. This is an important process in the formation of D-alanine and D-glutamate, which are essential bacterial cell wall components. This Bacillus sp. (strain YM-1) protein is D-alanine aminotransferase (dat).